Here is a 503-residue protein sequence, read N- to C-terminus: ESX-5 secretion system protein EccD5 (503 aa).

A run of 11 helical transmembrane segments spans residues 137–157 (IVAVQVGASMVATGVVLATGV), 169–189 (LTTIYTAVIGVLVLAVAMLLL), 200–220 (VADIMLMSAIMPVTVAAAAAP), 224–244 (VGSPQAVLGFGVLTVAAALAL), 250–270 (RLGIYTTIVIIGALTMLAALA), 272–292 (MVAATSAVTLLSSLLLICVVA), 359–379 (FLSGLLTGLGVMVVVCMTSLC), 382–402 (HTGQRWLPLILAGFTSGFLLL), 413–433 (SITLAGTAVIIAAAVCVRYAL), 439–459 (LAVSIVAAILVLLPAAGMAAA), and 480–500 (YLCLMPIFPLALWLMNVYAAI).

This sequence belongs to the EccD/Snm4 family. Part of the ESX-5 / type VII secretion system (T7SS), which is composed of cytosolic and membrane components. The ESX-5 membrane complex is composed of EccB5, EccC5, EccD5 and EccE5.

The protein localises to the cell inner membrane. Its function is as follows. Part of the ESX-5 specialized secretion system, which is responsible for the secretion of EsxN and a number of PE_PGRS and PPE proteins, including PPE41. The sequence is that of ESX-5 secretion system protein EccD5 from Mycobacterium tuberculosis (strain CDC 1551 / Oshkosh).